The following is a 413-amino-acid chain: Serine protease inhibitor A3L (413 aa).

Residues 1–28 (MAFIAALGLLMAGICPAVLCDGTLGRDT) form the signal peptide. Ser-30 carries the phosphoserine modification. N-linked (GlcNAc...) asparagine glycans are attached at residues Asn-102, Asn-182, Asn-220, and Asn-267. Residues 365–389 (GTEATAATGVATVIRRQPRTLNFNR) form an RCL region.

This sequence belongs to the serpin family. N-glycosylated. As to expression, liver.

Its subcellular location is the secreted. This chain is Serine protease inhibitor A3L (Serpina3l), found in Rattus norvegicus (Rat).